The primary structure comprises 105 residues: L-rhamnose mutarotase (105 aa).

Tyr19 serves as a coordination point for substrate. The active-site Proton donor is His23. Substrate is bound by residues Tyr42 and 77 to 78; that span reads WW.

It belongs to the rhamnose mutarotase family. Homodimer.

It is found in the cytoplasm. It catalyses the reaction alpha-L-rhamnose = beta-L-rhamnose. It participates in carbohydrate metabolism; L-rhamnose metabolism. In terms of biological role, involved in the anomeric conversion of L-rhamnose. This Mesorhizobium japonicum (strain LMG 29417 / CECT 9101 / MAFF 303099) (Mesorhizobium loti (strain MAFF 303099)) protein is L-rhamnose mutarotase.